The sequence spans 393 residues: Ferrochelatase, mitochondrial (393 aa).

A mitochondrion-targeting transit peptide spans 1–31 (MLSRTIRTQGSFLRRSQLTITRSFSVTFNMQ). Asp-351 is a catalytic residue.

This sequence belongs to the ferrochelatase family. Post-translationally, the leader peptide may be processed in two proteolytic steps, first between Ser-23 and Phe-24, second and by a different protease, to yield the mature protein.

It is found in the mitochondrion inner membrane. The catalysed reaction is heme b + 2 H(+) = protoporphyrin IX + Fe(2+). It participates in porphyrin-containing compound metabolism; protoheme biosynthesis; protoheme from protoporphyrin-IX: step 1/1. In terms of biological role, catalyzes the ferrous insertion into protoporphyrin IX. The protein is Ferrochelatase, mitochondrial (HEM15) of Saccharomyces cerevisiae (strain ATCC 204508 / S288c) (Baker's yeast).